We begin with the raw amino-acid sequence, 125 residues long: Small ribosomal subunit protein uS12 (125 aa).

D89 bears the 3-methylthioaspartic acid mark. Residues 104–125 form a disordered region; that stretch reads LQGVKDRKQSRSKYGSKRPKKA. A compositionally biased stretch (basic residues) spans 113–125; that stretch reads SRSKYGSKRPKKA.

The protein belongs to the universal ribosomal protein uS12 family. Part of the 30S ribosomal subunit. Contacts proteins S8 and S17. May interact with IF1 in the 30S initiation complex.

Its function is as follows. With S4 and S5 plays an important role in translational accuracy. Functionally, interacts with and stabilizes bases of the 16S rRNA that are involved in tRNA selection in the A site and with the mRNA backbone. Located at the interface of the 30S and 50S subunits, it traverses the body of the 30S subunit contacting proteins on the other side and probably holding the rRNA structure together. The combined cluster of proteins S8, S12 and S17 appears to hold together the shoulder and platform of the 30S subunit. The protein is Small ribosomal subunit protein uS12 of Leptothrix cholodnii (strain ATCC 51168 / LMG 8142 / SP-6) (Leptothrix discophora (strain SP-6)).